Consider the following 356-residue polypeptide: Ion-translocating oxidoreductase complex subunit D (356 aa).

4 consecutive transmembrane segments (helical) span residues 20–40 (LMLL…WFFG), 42–62 (GVLV…ALAI), 68–88 (PVGF…IGVS), and 117–137 (GFNP…SFPV). Threonine 177 is modified (FMN phosphoryl threonine). Transmembrane regions (helical) follow at residues 205–225 (WASA…LYLL), 229–249 (VYTW…AALF), 259–279 (GSPL…FIVT), 292–312 (VIYG…GSSY), and 315–335 (GVAF…YYTT).

The protein belongs to the NqrB/RnfD family. As to quaternary structure, the complex is composed of six subunits: RnfA, RnfB, RnfC, RnfD, RnfE and RnfG. FMN is required as a cofactor.

It is found in the cell inner membrane. Functionally, part of a membrane-bound complex that couples electron transfer with translocation of ions across the membrane. This Cellvibrio japonicus (strain Ueda107) (Pseudomonas fluorescens subsp. cellulosa) protein is Ion-translocating oxidoreductase complex subunit D.